A 311-amino-acid chain; its full sequence is Ribosomal RNA small subunit methyltransferase H (311 aa).

Residues Ala32–His34, Asp52, Phe79, Asp100, and Gln107 contribute to the S-adenosyl-L-methionine site.

The protein belongs to the methyltransferase superfamily. RsmH family.

Its subcellular location is the cytoplasm. The enzyme catalyses cytidine(1402) in 16S rRNA + S-adenosyl-L-methionine = N(4)-methylcytidine(1402) in 16S rRNA + S-adenosyl-L-homocysteine + H(+). Its function is as follows. Specifically methylates the N4 position of cytidine in position 1402 (C1402) of 16S rRNA. This chain is Ribosomal RNA small subunit methyltransferase H, found in Staphylococcus carnosus (strain TM300).